The chain runs to 235 residues: Small ribosomal subunit protein mS23 (235 aa).

Residues 51-71 form a disordered region; sequence PYPIQHTEPKDRGRAAQRPRN.

Belongs to the mitochondrion-specific ribosomal protein mS23 family. Component of the mitochondrial small ribosomal subunit.

It is found in the mitochondrion. The sequence is that of Small ribosomal subunit protein mS23 (RSM25) from Chaetomium globosum (strain ATCC 6205 / CBS 148.51 / DSM 1962 / NBRC 6347 / NRRL 1970) (Soil fungus).